The following is a 167-amino-acid chain: Single-stranded DNA-binding protein 2 (167 aa).

The SSB domain maps to M1 to E104. A disordered region spans residues N107 to F167. 2 stretches are compositionally biased toward low complexity: residues Q109–N118 and S132–S147. Residues D162–F167 carry the Important for interaction with partner proteins motif.

Homotetramer.

Plays an important role in DNA replication, recombination and repair. Binds to ssDNA and to an array of partner proteins to recruit them to their sites of action during DNA metabolism. The sequence is that of Single-stranded DNA-binding protein 2 (ssb2) from Staphylococcus aureus (strain MSSA476).